The sequence spans 953 residues: Nucleotide-binding oligomerization domain-containing protein 1 (953 aa).

The CARD domain occupies 15 to 107 (GCHSHIKLLK…VDLRLWLSEI (93 aa)). The region spanning 196 to 531 (ETVFVFGDAG…AFFTAFFLVA (336 aa)) is the NACHT domain. Residue 202-209 (GDAGVGKS) coordinates ATP. Residues cysteine 558 and cysteine 567 are each lipidated (S-palmitoyl cysteine). LRR repeat units follow at residues 702 to 725 (FHRQ…ELQP), 727 to 750 (FSRL…VLCE), 755 to 778 (YKIV…YVAQ), 783 to 806 (CRGL…CVAL), 839 to 862 (HPSL…SLAQ), 867 to 890 (NTTL…CFAE), 895 to 918 (NQTL…QLAR), and 923 to 946 (NTAI…VFEN). Cysteine 952 carries S-palmitoyl cysteine lipidation.

The protein belongs to the NOD1-NOD2 family. As to quaternary structure, homooligomer: homooligomerizes following ligand-binding, promoting RIPK2 recruitment. Interacts (via CARD domain) with RIPK2 (via CARD domain). Following RIPK2 recruitment, RIPK2 homooligomerizes via its CARD domain and forms long filaments named RIPosomes. Interacts (via CARD domain) with ubiquitin; inhibiting interaction with RIPK2. Interacts with ARHGEF2. Interacts with NLRP10 and recruits it to the cell membrane following invasive bacterial infection. Interacts with IFIH1; this interaction promotes transcription of antiviral genes and inhibition of viral replication. Interacts with Irgm1; promoting NOD1 degradation. Interacts with ATG16L1. Post-translationally, ubiquitinated. 'Lys-48'-linked polyubiquitination by RNF34 promotes proteasomal degradation and thereby negatively regulates NOD1 for instance in NF-kappa-B activation. Palmitoylated. Palmitoylation is required for proper recruitment to the bacterial entry site and hence for proper signaling upon cognate peptidoglycan detection. In terms of processing, degraded via selective autophagy following interaction with Irgm1. Irgm1 promotes NOD1-RIPK2 RIPosome recruitment to autophagosome membranes, promoting their SQSTM1/p62-dependent autophagic degradation. In terms of tissue distribution, although ubiquitously expressed, NOD1 levels are more abundant in immune cells, the gastrointestinal tract, and adipose tissue.

It localises to the cell membrane. It is found in the apical cell membrane. The protein localises to the basolateral cell membrane. The protein resides in the cytoplasm. Functionally, pattern recognition receptor (PRR) that detects bacterial peptidoglycan fragments and other danger signals and thus participates in both innate and adaptive immune responses. Specifically recognizes and binds gamma-D-glutamyl-meso-diaminopimelic acid (iE-DAP), a dipeptide present in peptidoglycan of Gram-negative bacteria. Preferentially binds iE-DAP in tetrapeptide-containing muropeptides (MurNAc-TetraDAP or TetraDAP). Ligand binding triggers oligomerization that facilitates the binding and subsequent activation of the proximal adapter receptor-interacting RIPK2. Following recruitment, RIPK2 undergoes 'Met-1'- (linear) and 'Lys-63'-linked polyubiquitination by E3 ubiquitin-protein ligases XIAP, BIRC2, BIRC3 and the LUBAC complex, becoming a scaffolding protein for downstream effectors, triggering activation of the NF-kappa-B and MAP kinases signaling. This in turn leads to the transcriptional activation of hundreds of genes involved in immune response. Also acts as a regulator of antiviral response elicited by dsRNA and the expression of RLR pathway members by targeting IFIH1 and TRAF3 to modulate the formation of IFIH1-MAVS and TRAF3-MAVS complexes leading to increased transcription of type I IFNs. Also acts as a regulator of autophagy via its interaction with ATG16L1, possibly by recruiting ATG16L1 at the site of bacterial entry. Besides recognizing pathogens, also involved in the endoplasmic reticulum stress response: acts by sensing and binding to the cytosolic metabolite sphingosine-1-phosphate generated in response to endoplasmic reticulum stress, initiating an inflammation process that leads to activation of the NF-kappa-B and MAP kinases signaling. In addition, plays a role in insulin trafficking in beta cells in a cell-autonomous manner. Mechanistically, upon recognizing cognate ligands, NOD1 and RIPK2 localize to insulin vesicles where they recruit RAB1A to direct insulin trafficking through the cytoplasm. The protein is Nucleotide-binding oligomerization domain-containing protein 1 of Mus musculus (Mouse).